The following is a 215-amino-acid chain: Rac-like GTP-binding protein ARAC10 (215 aa).

15-22 (GDGAVGKT) lines the GTP pocket. Positions 37–45 (YIPTVFDNF) match the Effector region motif. GTP contacts are provided by residues 62-66 (DTAGQ) and 120-123 (TKLD). 2 S-palmitoyl cysteine lipidation sites follow: C202 and C208.

The protein belongs to the small GTPase superfamily. Rho family. As to quaternary structure, component of the active ARAC10-IRC5-KIN13A complex. Interacts with ICR5.

The protein localises to the membrane. It localises to the cytoplasm. It is found in the cytoskeleton. Involved in local disassembly of cortical microtubules when associated with ICR5 and KIN13A. This is Rac-like GTP-binding protein ARAC10 (ARAC10) from Arabidopsis thaliana (Mouse-ear cress).